Here is a 206-residue protein sequence, read N- to C-terminus: Glycerol-3-phosphate acyltransferase (206 aa).

6 helical membrane passes run 4 to 24 (IIGI…LLVG), 55 to 75 (IIVL…PILL), 78 to 98 (ELHP…PVFA), 112 to 132 (MLLV…LTTL), 137 to 157 (MVSL…ITIG), and 158 to 178 (IVEQ…FVIF).

Belongs to the PlsY family. As to quaternary structure, probably interacts with PlsX.

Its subcellular location is the cell membrane. The catalysed reaction is an acyl phosphate + sn-glycerol 3-phosphate = a 1-acyl-sn-glycero-3-phosphate + phosphate. It functions in the pathway lipid metabolism; phospholipid metabolism. Its function is as follows. Catalyzes the transfer of an acyl group from acyl-phosphate (acyl-PO(4)) to glycerol-3-phosphate (G3P) to form lysophosphatidic acid (LPA). This enzyme utilizes acyl-phosphate as fatty acyl donor, but not acyl-CoA or acyl-ACP. This chain is Glycerol-3-phosphate acyltransferase, found in Exiguobacterium sibiricum (strain DSM 17290 / CCUG 55495 / CIP 109462 / JCM 13490 / 255-15).